A 314-amino-acid polypeptide reads, in one-letter code: MLQVIFLGSGGIMPTRERNVPAIALRYKGEIILFDVGEGTIRQMNSAKLSPMRVEKIFITHFHGDHYLGLGGLIQTMNLWNREKPLHIYGPKYTFEFVQNFLNSGFFRPGFEVHVHELGETRLKFKDYEIWSFKVEHGIPALGYVFKEKDKRGKFLPEKLAQYGLRPGPILGKLEKDGKIEWNGQVIRLEDVTGPRRRGVKVVYTGDTEPCERVRLFAERADLLIHDATYLSDGDRGDSYHSTVEEACETARRAKVKLLALFHRAFRYTYDEYLSGASKICQETGVNFVIPRDFDVLTYKSGEWKRENLLEEGK.

Zn(2+) is bound by residues H61, H63, D65, H66, H137, D207, and H263. Residue D65 is the Proton acceptor of the active site.

Belongs to the RNase Z family. As to quaternary structure, homodimer. Zn(2+) is required as a cofactor.

The enzyme catalyses Endonucleolytic cleavage of RNA, removing extra 3' nucleotides from tRNA precursor, generating 3' termini of tRNAs. A 3'-hydroxy group is left at the tRNA terminus and a 5'-phosphoryl group is left at the trailer molecule.. In terms of biological role, zinc phosphodiesterase, which displays some tRNA 3'-processing endonuclease activity. Probably involved in tRNA maturation, by removing a 3'-trailer from precursor tRNA. This is Ribonuclease Z from Thermococcus gammatolerans (strain DSM 15229 / JCM 11827 / EJ3).